The following is a 344-amino-acid chain: Heat-inducible transcription repressor HrcA (344 aa).

This sequence belongs to the HrcA family.

Functionally, negative regulator of class I heat shock genes (grpE-dnaK-dnaJ and groELS operons). Prevents heat-shock induction of these operons. This Corynebacterium aurimucosum (strain ATCC 700975 / DSM 44827 / CIP 107346 / CN-1) (Corynebacterium nigricans) protein is Heat-inducible transcription repressor HrcA.